Reading from the N-terminus, the 366-residue chain is Leucine dehydrogenase (366 aa).

The active site involves Lys-80. Residue 180–186 (GVGHVAY) participates in NAD(+) binding.

It belongs to the Glu/Leu/Phe/Val dehydrogenases family. As to quaternary structure, homooctamer.

The catalysed reaction is L-leucine + NAD(+) + H2O = 4-methyl-2-oxopentanoate + NH4(+) + NADH + H(+). Its pathway is amino-acid degradation; L-leucine degradation; 4-methyl-2-oxopentanoate from L-leucine (dehydrogenase route): step 1/1. Inhibited by pyridoxal phosphate. Catalyzes the reversible deamination of L-leucine to 4-methyl-2-oxopentanoate. Exhibits the highest activity with L-leucine as substrate, but can also use other L-amino acids such as L-isoleucine, L-valine and L-2-aminovaleric acid. All of the oxo analogs of the amino acid substrates serve as good substrates for the reverse reaction. The polypeptide is Leucine dehydrogenase (ldh) (Thermoactinomyces intermedius).